Here is a 239-residue protein sequence, read N- to C-terminus: Glandular kallikrein, prostatic (239 aa).

A Peptidase S1 domain is found at 1-236 (VIGGQECARD…YREWIERTMA (236 aa)). Intrachain disulfides connect Cys-7/Cys-151, Cys-26/Cys-42, Cys-128/Cys-197, Cys-162/Cys-176, and Cys-187/Cys-212. The Charge relay system role is filled by His-41. N-linked (GlcNAc...) asparagine glycosylation is present at Asn-78. Asp-96 acts as the Charge relay system in catalysis. Asn-169 is a glycosylation site (N-linked (GlcNAc...) asparagine). Catalysis depends on Ser-191, which acts as the Charge relay system.

It belongs to the peptidase S1 family. Kallikrein subfamily.

It catalyses the reaction Preferential cleavage of Arg-|-Xaa bonds in small molecule substrates. Highly selective action to release kallidin (lysyl-bradykinin) from kininogen involves hydrolysis of Met-|-Xaa or Leu-|-Xaa.. In terms of biological role, glandular kallikreins cleave Met-Lys and Arg-Ser bonds in kininogen to release Lys-bradykinin. The polypeptide is Glandular kallikrein, prostatic (Cavia porcellus (Guinea pig)).